The chain runs to 383 residues: Succinyl-diaminopimelate desuccinylase (383 aa).

Residue histidine 73 coordinates Zn(2+). The active site involves aspartate 75. Aspartate 107 contacts Zn(2+). Residue glutamate 141 is the Proton acceptor of the active site. Zn(2+) is bound by residues glutamate 142, glutamate 170, and histidine 356.

It belongs to the peptidase M20A family. DapE subfamily. In terms of assembly, homodimer. It depends on Zn(2+) as a cofactor. Co(2+) serves as cofactor.

It carries out the reaction N-succinyl-(2S,6S)-2,6-diaminopimelate + H2O = (2S,6S)-2,6-diaminopimelate + succinate. It participates in amino-acid biosynthesis; L-lysine biosynthesis via DAP pathway; LL-2,6-diaminopimelate from (S)-tetrahydrodipicolinate (succinylase route): step 3/3. Its function is as follows. Catalyzes the hydrolysis of N-succinyl-L,L-diaminopimelic acid (SDAP), forming succinate and LL-2,6-diaminopimelate (DAP), an intermediate involved in the bacterial biosynthesis of lysine and meso-diaminopimelic acid, an essential component of bacterial cell walls. This is Succinyl-diaminopimelate desuccinylase from Pseudomonas putida (strain GB-1).